Reading from the N-terminus, the 231-residue chain is L-ribulose-5-phosphate 4-epimerase (231 aa).

Residues glycine 27 to asparagine 28, serine 44 to glycine 45, and serine 74 to serine 75 each bind substrate. Residues aspartate 76, histidine 95, and histidine 97 each contribute to the Zn(2+) site. Residue aspartate 120 is the Proton donor/acceptor of the active site. Histidine 171 provides a ligand contact to Zn(2+). Tyrosine 229 acts as the Proton donor/acceptor in catalysis.

This sequence belongs to the aldolase class II family. AraD/FucA subfamily. Homotetramer. It depends on Zn(2+) as a cofactor.

The enzyme catalyses L-ribulose 5-phosphate = D-xylulose 5-phosphate. It participates in carbohydrate degradation; L-arabinose degradation via L-ribulose; D-xylulose 5-phosphate from L-arabinose (bacterial route): step 3/3. Involved in the degradation of L-arabinose. Catalyzes the interconversion of L-ribulose 5-phosphate (LRu5P) and D-xylulose 5-phosphate (D-Xu5P) via a retroaldol/aldol mechanism (carbon-carbon bond cleavage analogous to a class II aldolase reaction). This is L-ribulose-5-phosphate 4-epimerase from Salmonella typhimurium (strain LT2 / SGSC1412 / ATCC 700720).